Here is a 191-residue protein sequence, read N- to C-terminus: Cytochrome b-245 light chain (191 aa).

Topologically, residues 2 to 7 are cytoplasmic; the sequence is GQIEWA. The helical transmembrane segment at 8-30 threads the bilayer; that stretch reads MWANEQALASGLILITGGIVATA. The Extracellular portion of the chain corresponds to 31 to 35; the sequence is GQFTQ. Residues 36-53 traverse the membrane as a helical segment; that stretch reads WYLGAYSIAAGVLVCLLE. The Cytoplasmic segment spans residues 54–69; the sequence is YPRGKRSKGSTMERCG. The stretch at 70 to 80 is an intramembrane region; the sequence is QKYLTRVVKLF. Over 81 to 86 the chain is Cytoplasmic; it reads GPLTRN. Residues 87-104 form a helical membrane-spanning segment; it reads YYIRAFLHLGLAVPAGFL. L105 is a topological domain (extracellular). A helical membrane pass occupies residues 106–126; it reads ATILGTACLAIASGIYLLAAI. Residues 127-191 lie on the Cytoplasmic side of the membrane; that stretch reads RGEQWSPIEP…NPMPVNDEVV (65 aa). The tract at residues 134–191 is disordered; sequence IEPKPKERPQIGGTIKQPPSNPPPRPPAEARKKLSEEAAGVPTGGPQENPMPVNDEVV. T147 carries the post-translational modification Phosphothreonine. Residue K149 forms a Glycyl lysine isopeptide (Lys-Gly) (interchain with G-Cter in ubiquitin) linkage. S168 carries the phosphoserine modification.

The protein belongs to the p22phox family. Component of the phagocyte NADPH oxidase core complex/cytochrome b558 complex, composed of CYBB (heavy chain (beta)) and CYBA (light chain (alpha)). Component of the phagocyte NADPH oxidase complex composed of an obligatory core heterodimer formed by the membrane proteins CYBA and CYBB and the cytosolic regulatory subunits NCF1/p47-phox, NCF2/p67-phox, NCF4/p40-phox and the small GTPase RAC1 or RAC2. Interacts with NCF1 (via SH3 domain). Interacts with SH3PXD2A. Interacts with DUOX1, DUOX2 and TPO. Interacts with NOX4; this interaction mediates superoxide generation. Interacts with calprotectin (S100A8/9). Interacts with GBP7. Interacts with NOXO1. Forms a heterodimer with NOX3 and is essential for activity and cell membrane localization of NOX3. Interacts with NOX1. Post-translationally, phosphorylation at Thr-147 enhances NADPH oxidase activity by promoting NCF1/p47-phox binding. Ubiquitinated at Lys-149 likely by RNF145.

Its subcellular location is the cell membrane. Functionally, subunit of NADPH oxidase complexes that is required for the NADPH oxidase activity that generates, in various cell types, superoxide from molecular oxygen utilizing NADPH as an electron donor. Subunit of the phagocyte NADPH oxidase complex that mediates the transfer of electrons from cytosolic NADPH to O2 to produce the superoxide anion (O2(-)). In the activated complex, electrons are first transferred from NADPH to flavin adenine dinucleotide (FAD) and subsequently transferred via two heme molecules to molecular oxygen, producing superoxide through an outer-sphere reaction. Activation of the NADPH oxidase complex is initiated by the assembly of cytosolic subunits of the NADPH oxidase complex with the core NADPH oxidase complex to form a complex at the plasma membrane or phagosomal membrane. This activation process is initiated by phosphorylation dependent binding of the cytosolic NCF1/p47-phox subunit to the C-terminus of CYBA/p22-phox. Aassociates with NOX3 to form a functional NADPH oxidase constitutively generating superoxide. The protein is Cytochrome b-245 light chain of Bison bison (American bison).